A 205-amino-acid polypeptide reads, in one-letter code: Thymidylate kinase (205 aa).

7-14 (GIDGSGKT) is an ATP binding site.

Belongs to the thymidylate kinase family.

It carries out the reaction dTMP + ATP = dTDP + ADP. Functionally, phosphorylation of dTMP to form dTDP in both de novo and salvage pathways of dTTP synthesis. The protein is Thymidylate kinase of Wolbachia sp. subsp. Brugia malayi (strain TRS).